Here is an 873-residue protein sequence, read N- to C-terminus: MGTVTPMMQQYLDIKEQYKDCILFFRLGDFYEMFFSDAELASRELEITLTGRDCGLEERAPMCGVPFHAADNYIARLVSKGYKVAICEQVEDPALAKGIVKRDVVKVVTPGTVTDITMLDERKNNYLMSVYKNGNFYGLASVDITTGDFYATRITWGNTRGKLLDEIAKYLPSEIIVNNELNSDNELTSEIKQRFNTYVSTFEETSFEYGNSMDILANHFEKQTLNIQEYDIAVNASGALLKYLESTQKVNLSHIQKFNSYALEEYMILDASSRRNLELTETMREKSKKGSLLWVLDKTMTSMGGRLLRKWIEQPLINHGDISLRLDAVEELKNKFMVRVEARELLKRVYDIERLMGKVVLGSVNCRDLIALKNSMCQIPYIKSLLNGFEAEYIKNCGEQLDCLEDVCNLIEVSIIDEPPVTIKEGGIIKDGYNPEVDKLRMASIQGKDWIAALEASQREKTGIKNLKVGFNRVFGYYIEVTKSYFSLVPEEYIRKQTLSNCERYITPELKEIEDTILGAEEKIIQLEYSLFVEIKEKIAEQLSRIKSTARALAEIDVLASLAEVADREGYCKPEVSLSDKIEIIEGRHPVVEKMTDKSGFVPNDTVLDMEEDRLAIITGPNMAGKSTYMRQTALIVLMAQIGSFVPAATAKIGLVDRIFTRVGASDDLASGQSTFMVEMSEVANILINATKRSLLVLDEIGRGTSTFDGLSIAWAVIEYIVNKEQLGCRTLFATHYHELTELEGKLPGIKNYCITVKEKGEDVIFLRKIIRGGADGSYGIQVAKLAGVPQSVIDRAKEILSNLDDADINRSGKARRIKKQVDGQLDLFAQAAKASADAEILEEIRKIDISRLTPIDSMNILYELQRKMNNRE.

620–627 is a binding site for ATP; sequence GPNMAGKS.

It belongs to the DNA mismatch repair MutS family.

This protein is involved in the repair of mismatches in DNA. It is possible that it carries out the mismatch recognition step. This protein has a weak ATPase activity. The sequence is that of DNA mismatch repair protein MutS from Ruminiclostridium cellulolyticum (strain ATCC 35319 / DSM 5812 / JCM 6584 / H10) (Clostridium cellulolyticum).